The sequence spans 233 residues: Glucosamine-6-phosphate deaminase (233 aa).

Residue Asp-62 is the Proton acceptor; for enolization step of the active site. Residue Asn-128 is the For ring-opening step of the active site. His-130 acts as the Proton acceptor; for ring-opening step in catalysis. The active-site For ring-opening step is Glu-135.

It belongs to the glucosamine/galactosamine-6-phosphate isomerase family. NagB subfamily.

The enzyme catalyses alpha-D-glucosamine 6-phosphate + H2O = beta-D-fructose 6-phosphate + NH4(+). It participates in amino-sugar metabolism; N-acetylneuraminate degradation; D-fructose 6-phosphate from N-acetylneuraminate: step 5/5. In terms of biological role, catalyzes the reversible isomerization-deamination of glucosamine 6-phosphate (GlcN6P) to form fructose 6-phosphate (Fru6P) and ammonium ion. The protein is Glucosamine-6-phosphate deaminase of Streptococcus thermophilus (strain ATCC BAA-491 / LMD-9).